The following is a 390-amino-acid chain: MKPIIYIKYGELTLKGKNRTQFIKVLVHNIKQILIQYQNLTYCVGYDNLKIINLENYNLKQIIDDLKEVYGIAFICIAYQVDKELSEIQLACKEFINDYEQTFKIEARRSDKSFKYNSMEIKQMCAAYLLQNSPLLKVDVHRPQLLINIEIKYDCAIVYGHKIMGAKGLPVGINGKALVLLSGGIDSPVASRLIMKRGISIDFITFITPPHTSQKALDKTIALAKQITLDNKLTKANLYVCNFTKLQDEIAHISKESYRITLMRRYFMRIAKRLAISVKANALVTGEALGQVASQTLNSMQTISSVLDNFLVLRPLIAYDKEEIISLAKRFNTYELSILPYDDSCSLFAPKNPTTNPNVQTAAKLEEESLVLDAIYELVYTKEITKINLS.

The 103-residue stretch at 60–162 (KQIIDDLKEV…YDCAIVYGHK (103 aa)) folds into the THUMP domain. ATP is bound by residues 180–181 (LL), 205–206 (TF), R264, G286, and Q295.

This sequence belongs to the ThiI family.

It is found in the cytoplasm. It catalyses the reaction [ThiI sulfur-carrier protein]-S-sulfanyl-L-cysteine + a uridine in tRNA + 2 reduced [2Fe-2S]-[ferredoxin] + ATP + H(+) = [ThiI sulfur-carrier protein]-L-cysteine + a 4-thiouridine in tRNA + 2 oxidized [2Fe-2S]-[ferredoxin] + AMP + diphosphate. It carries out the reaction [ThiS sulfur-carrier protein]-C-terminal Gly-Gly-AMP + S-sulfanyl-L-cysteinyl-[cysteine desulfurase] + AH2 = [ThiS sulfur-carrier protein]-C-terminal-Gly-aminoethanethioate + L-cysteinyl-[cysteine desulfurase] + A + AMP + 2 H(+). Its pathway is cofactor biosynthesis; thiamine diphosphate biosynthesis. Functionally, catalyzes the ATP-dependent transfer of a sulfur to tRNA to produce 4-thiouridine in position 8 of tRNAs, which functions as a near-UV photosensor. Also catalyzes the transfer of sulfur to the sulfur carrier protein ThiS, forming ThiS-thiocarboxylate. This is a step in the synthesis of thiazole, in the thiamine biosynthesis pathway. The sulfur is donated as persulfide by IscS. The protein is Probable tRNA sulfurtransferase of Ureaplasma parvum serovar 3 (strain ATCC 27815 / 27 / NCTC 11736).